The primary structure comprises 297 residues: Bifunctional protein FolD (297 aa).

NADP(+) is bound by residues 167–169 and isoleucine 233; that span reads GRS.

This sequence belongs to the tetrahydrofolate dehydrogenase/cyclohydrolase family. As to quaternary structure, homodimer.

The catalysed reaction is (6R)-5,10-methylene-5,6,7,8-tetrahydrofolate + NADP(+) = (6R)-5,10-methenyltetrahydrofolate + NADPH. The enzyme catalyses (6R)-5,10-methenyltetrahydrofolate + H2O = (6R)-10-formyltetrahydrofolate + H(+). The protein operates within one-carbon metabolism; tetrahydrofolate interconversion. Its function is as follows. Catalyzes the oxidation of 5,10-methylenetetrahydrofolate to 5,10-methenyltetrahydrofolate and then the hydrolysis of 5,10-methenyltetrahydrofolate to 10-formyltetrahydrofolate. This is Bifunctional protein FolD from Zymomonas mobilis subsp. mobilis (strain ATCC 31821 / ZM4 / CP4).